A 525-amino-acid polypeptide reads, in one-letter code: Bifunctional enzyme NanE/NanK (525 aa).

Positions 1-241 are manNAc-6-P epimerase; the sequence is MRGSPRNLCR…DAVESAAKPS (241 aa). The manNAc kinase stretch occupies residues 242 to 525; the sequence is SPVLAFDIGG…VADLAATYFS (284 aa). ATP contacts are provided by residues 246-253 and 372-379; these read AFDIGGTK and GIGGGIVL.

The protein in the N-terminal section; belongs to the NanE family. This sequence in the C-terminal section; belongs to the ROK (NagC/XylR) family. NanK subfamily.

It carries out the reaction an N-acyl-D-glucosamine 6-phosphate = an N-acyl-D-mannosamine 6-phosphate. The enzyme catalyses an N-acyl-D-mannosamine + ATP = an N-acyl-D-mannosamine 6-phosphate + ADP + H(+). Its pathway is amino-sugar metabolism; N-acetylneuraminate degradation; D-fructose 6-phosphate from N-acetylneuraminate: step 2/5. It functions in the pathway amino-sugar metabolism; N-acetylneuraminate degradation; D-fructose 6-phosphate from N-acetylneuraminate: step 3/5. Functionally, converts N-acetylmannosamine-6-phosphate (ManNAc-6-P) to N-acetylglucosamine-6-phosphate (GlcNAc-6-P). Its function is as follows. Catalyzes the phosphorylation of N-acetylmannosamine (ManNAc) to ManNAc-6-P. This is Bifunctional enzyme NanE/NanK (nanEK) from Brucella suis biovar 1 (strain 1330).